Consider the following 125-residue polypeptide: Prefoldin subunit beta (125 aa).

This sequence belongs to the prefoldin subunit beta family. As to quaternary structure, heterohexamer of two alpha and four beta subunits.

Its subcellular location is the cytoplasm. Functionally, molecular chaperone capable of stabilizing a range of proteins. Seems to fulfill an ATP-independent, HSP70-like function in archaeal de novo protein folding. The polypeptide is Prefoldin subunit beta (Sulfolobus acidocaldarius (strain ATCC 33909 / DSM 639 / JCM 8929 / NBRC 15157 / NCIMB 11770)).